The following is an 854-amino-acid chain: Envelope glycoprotein B (854 aa).

The N-terminal stretch at 1-30 (MSKNWFPLLCASVLVVYVSIASSSTGTASG) is a signal peptide. The Virion surface segment spans residues 31–723 (AVTPTSPTEN…EGVVGFIKNP (693 aa)). 3 N-linked (GlcNAc...) asparagine; by host glycosylation sites follow: N40, N48, and N60. Disulfide bonds link C69-C524, C86-C480, C160-C225, C317-C364, and C546-C583. Residues 127-133 (SYSFIRE) are involved in fusion and/or binding to host membrane. N-linked (GlcNAc...) asparagine; by host glycosylation occurs at N183. Positions 212–219 (GSTWLYTT) are involved in fusion and/or binding to host membrane. N-linked (GlcNAc...) asparagine; by host glycans are attached at residues N256, N275, N314, N356, N378, N382, N390, N423, N426, N442, N558, and N595. Hydrophobic membrane proximal region regions lie at residues 669–721 (VEGK…GFIK) and 700–720 (VAIG…VGFI). The chain crosses the membrane as a helical span at residues 724-744 (FGSFTVILFLLAVLGVIYLIY). The Intravirion segment spans residues 745 to 854 (MRQKRAYEKP…YQKIQNEYEV (110 aa)).

It belongs to the herpesviridae glycoprotein B family. In terms of assembly, homotrimer; disulfide-linked. Binds to heparan sulfate proteoglycans. Interacts with gH/gL heterodimer. A proteolytic cleavage by host furin generates two subunits that remain linked by disulfide bonds.

Its subcellular location is the virion membrane. The protein resides in the host cell membrane. The protein localises to the host endosome membrane. It localises to the host Golgi apparatus membrane. In terms of biological role, envelope glycoprotein that forms spikes at the surface of virion envelope. Essential for the initial attachment to heparan sulfate moieties of the host cell surface proteoglycans. Involved in fusion of viral and cellular membranes leading to virus entry into the host cell. Following initial binding to its host receptors, membrane fusion is mediated by the fusion machinery composed at least of gB and the heterodimer gH/gL. May be involved in the fusion between the virion envelope and the outer nuclear membrane during virion egress. The sequence is that of Envelope glycoprotein B from Macaca mulatta (Rhesus macaque).